Consider the following 469-residue polypeptide: 3-isopropylmalate dehydratase large subunit (469 aa).

The [4Fe-4S] cluster site is built by cysteine 346, cysteine 406, and cysteine 409.

The protein belongs to the aconitase/IPM isomerase family. LeuC type 1 subfamily. In terms of assembly, heterodimer of LeuC and LeuD. [4Fe-4S] cluster serves as cofactor.

The catalysed reaction is (2R,3S)-3-isopropylmalate = (2S)-2-isopropylmalate. The protein operates within amino-acid biosynthesis; L-leucine biosynthesis; L-leucine from 3-methyl-2-oxobutanoate: step 2/4. Its function is as follows. Catalyzes the isomerization between 2-isopropylmalate and 3-isopropylmalate, via the formation of 2-isopropylmaleate. The polypeptide is 3-isopropylmalate dehydratase large subunit (Lysinibacillus sphaericus (strain C3-41)).